The following is a 70-amino-acid chain: Kappa-scoloptoxin(07)-Ssm2b (70 aa).

The signal sequence occupies residues 1–19 (MLVFYALLFVSVFSSTVMG). Residues 20 to 39 (ATIDKPILREAIEEIDVNKR) constitute a propeptide that is removed on maturation.

It belongs to the scoloptoxin-07 family. Post-translationally, contains 3 disulfide bonds. Expressed by the venom gland.

It localises to the secreted. In terms of biological role, inhibits voltage-gated potassium channels. This is Kappa-scoloptoxin(07)-Ssm2b from Scolopendra mutilans (Chinese red-headed centipede).